A 108-amino-acid polypeptide reads, in one-letter code: Ig kappa chain V-V region EPC 109 (108 aa).

The segment at 1–23 (DVQMIQSPSSLSASLGDIVTMTC) is framework-1. Residues Cys-23 and Cys-88 are joined by a disulfide bond. Residues 24-34 (QASQGTNINLN) are complementarity-determining-1. The framework-2 stretch occupies residues 35–49 (WFQQKPGKAPKLLIY). Residues 50 to 56 (GASILEA) form a complementarity-determining-2 region. Positions 57–88 (GVPSRFSGRRYGTDFTLTISSLEDEDMATYFC) are framework-3. A complementarity-determining-3 region spans residues 89 to 97 (LQHSYLPYT). Positions 98-108 (FGGGTKLEKKR) are framework-4.

This chain is Ig kappa chain V-V region EPC 109, found in Mus musculus (Mouse).